A 111-amino-acid chain; its full sequence is Large ribosomal subunit protein uL22 (111 aa).

Belongs to the universal ribosomal protein uL22 family. Part of the 50S ribosomal subunit.

Its function is as follows. This protein binds specifically to 23S rRNA; its binding is stimulated by other ribosomal proteins, e.g. L4, L17, and L20. It is important during the early stages of 50S assembly. It makes multiple contacts with different domains of the 23S rRNA in the assembled 50S subunit and ribosome. The globular domain of the protein is located near the polypeptide exit tunnel on the outside of the subunit, while an extended beta-hairpin is found that lines the wall of the exit tunnel in the center of the 70S ribosome. The polypeptide is Large ribosomal subunit protein uL22 (Citrifermentans bemidjiense (strain ATCC BAA-1014 / DSM 16622 / JCM 12645 / Bem) (Geobacter bemidjiensis)).